Consider the following 342-residue polypeptide: Ribosomal RNA small subunit methyltransferase C (342 aa).

It belongs to the methyltransferase superfamily. RsmC family. As to quaternary structure, monomer.

It localises to the cytoplasm. The catalysed reaction is guanosine(1207) in 16S rRNA + S-adenosyl-L-methionine = N(2)-methylguanosine(1207) in 16S rRNA + S-adenosyl-L-homocysteine + H(+). In terms of biological role, specifically methylates the guanine in position 1207 of 16S rRNA in the 30S particle. In Salmonella paratyphi A (strain ATCC 9150 / SARB42), this protein is Ribosomal RNA small subunit methyltransferase C.